We begin with the raw amino-acid sequence, 376 residues long: S-adenosylmethionine synthase (376 aa).

ATP is bound at residue His-14. Asp-16 is a Mg(2+) binding site. K(+) is bound at residue Glu-42. Residues Glu-55 and Gln-98 each contribute to the L-methionine site. Residues 98-108 (QSPEIALGISS) are flexible loop. ATP contacts are provided by residues 158–160 (DGK), 224–225 (RF), Asp-233, 239–240 (RK), Ala-256, and Lys-260. Position 233 (Asp-233) interacts with L-methionine. Lys-264 is an L-methionine binding site.

This sequence belongs to the AdoMet synthase family. In terms of assembly, homotetramer; dimer of dimers. Requires Mg(2+) as cofactor. It depends on K(+) as a cofactor.

The protein localises to the cytoplasm. The enzyme catalyses L-methionine + ATP + H2O = S-adenosyl-L-methionine + phosphate + diphosphate. Its pathway is amino-acid biosynthesis; S-adenosyl-L-methionine biosynthesis; S-adenosyl-L-methionine from L-methionine: step 1/1. Functionally, catalyzes the formation of S-adenosylmethionine (AdoMet) from methionine and ATP. The overall synthetic reaction is composed of two sequential steps, AdoMet formation and the subsequent tripolyphosphate hydrolysis which occurs prior to release of AdoMet from the enzyme. The polypeptide is S-adenosylmethionine synthase (Aquifex aeolicus (strain VF5)).